The following is a 254-amino-acid chain: (2Z,6E)-farnesyl diphosphate synthase (254 aa).

Asp-34 is an active-site residue. A Mg(2+)-binding site is contributed by Asp-34. Substrate is bound by residues 35–38, Trp-39, His-52, and 80–82; these read GNRR and STD. The active-site Proton acceptor is Asn-83. Substrate contacts are provided by residues Arg-86, Arg-203, and 209-211; that span reads RLS. Residue Glu-222 participates in Mg(2+) binding.

It belongs to the UPP synthase family. Z-FPP synthase subfamily. In terms of assembly, homodimer. Mg(2+) serves as cofactor.

The enzyme catalyses isopentenyl diphosphate + (2E)-geranyl diphosphate = (2Z,6E)-farnesyl diphosphate + diphosphate. In terms of biological role, catalyzes the condensation of only one isopentenyl pyrophosphate (IPP) unit in the cis configuration to E-geranyl diphosphate (E-GPP) generating the 15 carbon product (2Z,6E)-farnesyl diphosphate (Z-FPP or EZ-FPP). Only geranyl diphosphate (GPP) can be used as isoprenyl acceptor. This Thermobifida fusca (strain YX) protein is (2Z,6E)-farnesyl diphosphate synthase.